Here is a 224-residue protein sequence, read N- to C-terminus: Synaptogyrin-2 (224 aa).

Position 1 is an N-acetylmethionine (methionine 1). A Phosphoserine modification is found at serine 3. The region spanning 20–171 is the MARVEL domain; it reads FLSQPQVVTR…LASLAYQRYK (152 aa). The next 4 membrane-spanning stretches (helical) occupy residues 31-51, 72-92, 105-125, and 147-167; these read VSMVLALIVFSCIFGEGYTNI, SAIGVLAFLASAFFLVVDAFF, VIGDLLFSALWTFLWFVGFCF, and AAITFSFFSIFSWGVLASLAY.

Belongs to the synaptogyrin family. In terms of processing, may be tyrosine phosphorylated by Src.

Its subcellular location is the cytoplasmic vesicle membrane. It localises to the cytoplasmic vesicle. The protein resides in the secretory vesicle. The protein localises to the synaptic vesicle membrane. Functionally, may play a role in regulated exocytosis. In neuronal cells, modulates the localization of synaptophysin/SYP into synaptic-like microvesicles and may therefore play a role in the formation and/or the maturation of this vesicles. May also play a role in GLUT4 storage and transport to the plasma membrane. This chain is Synaptogyrin-2, found in Mus musculus (Mouse).